A 372-amino-acid polypeptide reads, in one-letter code: Cyanuric acid amidohydrolase (372 aa).

An RU A region spans residues 1-105 (MPTTLRRAHV…IVFEAREVDE (105 aa)). Residues R56 and 84–85 (SG) each bind substrate. The RU B stretch occupies residues 115–252 (SLALGRARTP…HEIMVAGMSR (138 aa)). K165 is a catalytic residue. Residues R197 and 235–236 (SG) each bind substrate. Catalysis depends on S235, which acts as the Nucleophile. An RU C region spans residues 258–372 (LAIDHGVMRD…GPVAIIVERT (115 aa)). Residue E305 coordinates Mg(2+). Substrate contacts are provided by residues R332 and 351–352 (SG). Mg(2+) contacts are provided by A354, Q357, G358, P359, and G362.

The protein belongs to the cyclic amide hydrolase (CyAH) family. As to quaternary structure, homotetramer.

It catalyses the reaction cyanurate + H2O = 1-carboxybiuret + H(+). The protein operates within xenobiotic degradation; atrazine degradation; biuret from cyanurate: step 1/1. Its activity is regulated as follows. Inhibited by barbituric acid. Functionally, responsible for the hydrolysis of cyanuric acid, an intermediate formed during catabolism of s-triazine based compounds in herbicides such as atrazine and polymers such as melamine. Catalyzes the hydrolytic opening of the s-triazine ring of cyanuric acid (2,4,6-trihydroxy-s-triazine) to yield carbon dioxide and carboxybiuret, which spontaneously decarboxylates to biuret. The protein is Cyanuric acid amidohydrolase of Bradyrhizobium sp. (strain ORS 375).